Consider the following 439-residue polypeptide: MKSRVYVRFDRGFHVICPYQAKLAGSRKNDGAGYISPLALKSPIGLQHDLEDGCRIRSAFGKCIVNSRFLALIDVRKSGFKERGSKEPHGNSFVYWVTYSFLQFFETTMDELPSGRGMGGRLPFNQSFWEEFLSGREGQLPTLPDISHVSKSVIRILGGNPGSMHLQGTNTYLVGTGRSRILIDTAQGLPVWIDCISSFLHTQKIELSYVLLTHWHGDHTGGVPDLIAQNSSLADKIYKNHPDSGQNPITHGQIFSVDGATVRAIFTPGHSVDHMCFLLEEENALFTGDNVLGHGFSVAQDLGRYMDSLRDMASLGCRIGYPAHGAVIENLPGKLEEYIQHREGRERMMLSALTRQRVRGEGLREEGVKCGLTLNEIVMAIYGKLPPEVIEKALAPSLLQVLWKLTEDRMVGFKPGDPLKRQWFALEQRKRNKARGYPS.

His214, His216, Asp218, and His219 together coordinate Zn(2+). The active-site Proton donor/acceptor is Asp218.

Belongs to the metallo-beta-lactamase superfamily. Zn(2+) is required as a cofactor.

Its pathway is secondary metabolite biosynthesis. Its function is as follows. Lactamase-like protein; part of the gene cluster that mediates the biosynthesis of neosartoricin B, a prenylated anthracenone that probably exhibits T-cell antiproliferative activity, suggestive of a physiological role as an immunosuppressive agent. The non-reducing polyketide synthase nscA probably synthesizes and cyclizes the decaketide backbone. The hydrolase nscB then mediates the product release through hydrolysis followed by spontaneous decarboxylation. The prenyltransferase nscD catalyzes the addition of the dimethylallyl group to the aromatic C5. The FAD-dependent monooxygenase nscC is then responsible for the stereospecific hydroxylation at C2. Neosartoricin B can be converted into two additional compounds neosartoricins C and D. Neosartoricin C is a spirocyclic compound that is cyclized through the attack of C3 hydroxyl on C14, followed by dehydration. On the other hand, neosartoricin D is a further cyclized compound in which attack of C2 on C14 in neosartoricin C results in the formation of the acetal-containing dioxabicyclo-octanone ring. Both of these compounds are novel and possibly represent related metabolites of the gene cluster. In Arthroderma benhamiae (strain ATCC MYA-4681 / CBS 112371) (Trichophyton mentagrophytes), this protein is Lactamase-like protein nscB.